We begin with the raw amino-acid sequence, 51 residues long: Glutamine synthetase (51 aa).

This sequence belongs to the glutamine synthetase family. As to quaternary structure, homooctamer.

It localises to the cytoplasm. It carries out the reaction L-glutamate + NH4(+) + ATP = L-glutamine + ADP + phosphate + H(+). In Vitis sp. (Grape), this protein is Glutamine synthetase.